Here is a 166-residue protein sequence, read N- to C-terminus: Large ribosomal subunit protein uL10 (166 aa).

Belongs to the universal ribosomal protein uL10 family. As to quaternary structure, part of the ribosomal stalk of the 50S ribosomal subunit. The N-terminus interacts with L11 and the large rRNA to form the base of the stalk. The C-terminus forms an elongated spine to which L12 dimers bind in a sequential fashion forming a multimeric L10(L12)X complex.

Forms part of the ribosomal stalk, playing a central role in the interaction of the ribosome with GTP-bound translation factors. The chain is Large ribosomal subunit protein uL10 from Oceanobacillus iheyensis (strain DSM 14371 / CIP 107618 / JCM 11309 / KCTC 3954 / HTE831).